Reading from the N-terminus, the 291-residue chain is tRNA pseudouridine synthase B (291 aa).

Catalysis depends on Asp-41, which acts as the Nucleophile.

This sequence belongs to the pseudouridine synthase TruB family. Type 1 subfamily.

The enzyme catalyses uridine(55) in tRNA = pseudouridine(55) in tRNA. Functionally, responsible for synthesis of pseudouridine from uracil-55 in the psi GC loop of transfer RNAs. The sequence is that of tRNA pseudouridine synthase B from Parasynechococcus marenigrum (strain WH8102).